We begin with the raw amino-acid sequence, 257 residues long: UPF0246 protein SO_3540 (257 aa).

Belongs to the UPF0246 family.

The polypeptide is UPF0246 protein SO_3540 (Shewanella oneidensis (strain ATCC 700550 / JCM 31522 / CIP 106686 / LMG 19005 / NCIMB 14063 / MR-1)).